Consider the following 45-residue polypeptide: Large ribosomal subunit protein bL34 (45 aa).

The tract at residues 26-45 (RAGRSILSARRSKGRSQLSA) is disordered.

It belongs to the bacterial ribosomal protein bL34 family.

The protein is Large ribosomal subunit protein bL34 of Parafrankia sp. (strain EAN1pec).